We begin with the raw amino-acid sequence, 183 residues long: Dual-action ribosomal maturation protein DarP (183 aa).

The disordered stretch occupies residues 1-27 (MSSHSQEPVGEENFDDSEYDRPSKSQV). A compositionally biased stretch (acidic residues) spans 9–18 (VGEENFDDSE).

Belongs to the DarP family.

Its subcellular location is the cytoplasm. Member of a network of 50S ribosomal subunit biogenesis factors which assembles along the 30S-50S interface, preventing incorrect 23S rRNA structures from forming. Promotes peptidyl transferase center (PTC) maturation. The sequence is that of Dual-action ribosomal maturation protein DarP from Bordetella parapertussis (strain 12822 / ATCC BAA-587 / NCTC 13253).